Consider the following 96-residue polypeptide: MNTTDDVSCAEIYVSGRVQGVYFRGFTQKTATSLGLMGYAQNLPDGRVKVVAQGKRSCISELLDHLHIGPELSNVECIEVGWMGLSDTFTDFFIKR.

In terms of domain architecture, Acylphosphatase-like spans 9 to 96 (CAEIYVSGRV…DTFTDFFIKR (88 aa)). Residues arginine 24 and asparagine 42 contribute to the active site.

This sequence belongs to the acylphosphatase family.

The enzyme catalyses an acyl phosphate + H2O = a carboxylate + phosphate + H(+). This is Acylphosphatase (acyP) from Methanococcoides burtonii (strain DSM 6242 / NBRC 107633 / OCM 468 / ACE-M).